The primary structure comprises 284 residues: Interferon antagonist OPG039 (284 aa).

ANK repeat units follow at residues 29–58, 60–89, 93–122, 127–157, 159–188, and 192–221; these read NGHSVLYYAIADNNVRLVCTLLNAGALKNL, DNEFPLHQAATLEDTKIVKILLFSGMDDSQ, KGNTALYYAVDSGNMQTVKLFVKKNWRLMF, GWKTSFYHAVMLNDVSIVSYFLSEIPSPFDL, ILLSCIHTTIKNGHVDMMILLLDYMTSTNT, and LFIPDIKLAIDNKDIEMLQALFKYDINIYS.

This sequence belongs to the orthopoxvirus OPG039 family.

The protein resides in the host cytoplasm. It is found in the host nucleus. Inhibits antiviral activity induced by type I interferons. Does not block signal transduction of IFN, but is important to counter the host antiviral state induced by a pre-treatment with IFN. Plays a role in the inhibition of host NF-kappa-B activation by preventing the acetylation of the RELA/p65 subunit of NF-kappaB. This Cynomys gunnisoni (Gunnison's prairie dog) protein is Interferon antagonist OPG039 (OPG039).